The chain runs to 76 residues: uORF2 protein (76 aa).

In terms of biological role, plays a role in viral replication. This chain is uORF2 protein, found in Zika virus (isolate ZIKV/Human/French Polynesia/10087PF/2013) (ZIKV).